The primary structure comprises 987 residues: uncharacterized protein (987 aa).

2 helical membrane-spanning segments follow: residues 12 to 32 (FIYLCILLFVFMASMLNSVSG) and 958 to 978 (VENNFEIFLILINVIFGLGIL).

The protein to M.jannaschii MJ1393 and A.fulgidus AF2028.

It localises to the cell membrane. This is an uncharacterized protein from Methanocaldococcus jannaschii (strain ATCC 43067 / DSM 2661 / JAL-1 / JCM 10045 / NBRC 100440) (Methanococcus jannaschii).